Here is a 718-residue protein sequence, read N- to C-terminus: Putative methyltransferase NSUN7 (718 aa).

The Nucleophile role is filled by Cys-439. 3 disordered regions span residues 536 to 557 (GKSS…KGAT), 578 to 616 (ANLS…PAVP), and 694 to 718 (SLSR…RRWL). Residues 538-549 (SSKREKKKKKSK) show a composition bias toward basic residues. The span at 591–604 (QKNTAQVGASSQTR) shows a compositional bias: polar residues. Residues 696-706 (SRKEEKPKDDT) show a composition bias toward basic and acidic residues.

The protein belongs to the class I-like SAM-binding methyltransferase superfamily. RsmB/NOP family.

In terms of biological role, may have S-adenosyl-L-methionine-dependent methyl-transferase activity. The polypeptide is Putative methyltransferase NSUN7 (NSUN7) (Homo sapiens (Human)).